The chain runs to 225 residues: Glycerol-3-phosphate acyltransferase (225 aa).

The next 6 membrane-spanning stretches (helical) occupy residues 1–21, 56–76, 95–115, 134–154, 159–178, and 182–201; these read MAIW…LGSF, GPGL…VALV, IGLW…LGHS, VLLV…ALVV, IVSL…MFVA, and LAYV…RHWA.

The protein belongs to the PlsY family. In terms of assembly, probably interacts with PlsX.

It is found in the cell inner membrane. It catalyses the reaction an acyl phosphate + sn-glycerol 3-phosphate = a 1-acyl-sn-glycero-3-phosphate + phosphate. Its pathway is lipid metabolism; phospholipid metabolism. Its function is as follows. Catalyzes the transfer of an acyl group from acyl-phosphate (acyl-PO(4)) to glycerol-3-phosphate (G3P) to form lysophosphatidic acid (LPA). This enzyme utilizes acyl-phosphate as fatty acyl donor, but not acyl-CoA or acyl-ACP. The protein is Glycerol-3-phosphate acyltransferase of Acaryochloris marina (strain MBIC 11017).